The primary structure comprises 499 residues: Probable cytosol aminopeptidase (499 aa).

The Mn(2+) site is built by Lys-267 and Asp-272. Residue Lys-279 is part of the active site. Residues Asp-290, Asp-349, and Glu-351 each coordinate Mn(2+). Residue Arg-353 is part of the active site.

This sequence belongs to the peptidase M17 family. The cofactor is Mn(2+).

The protein resides in the cytoplasm. The enzyme catalyses Release of an N-terminal amino acid, Xaa-|-Yaa-, in which Xaa is preferably Leu, but may be other amino acids including Pro although not Arg or Lys, and Yaa may be Pro. Amino acid amides and methyl esters are also readily hydrolyzed, but rates on arylamides are exceedingly low.. It catalyses the reaction Release of an N-terminal amino acid, preferentially leucine, but not glutamic or aspartic acids.. In terms of biological role, presumably involved in the processing and regular turnover of intracellular proteins. Catalyzes the removal of unsubstituted N-terminal amino acids from various peptides. The chain is Probable cytosol aminopeptidase from Buchnera aphidicola subsp. Acyrthosiphon pisum (strain 5A).